We begin with the raw amino-acid sequence, 898 residues long: Eukaryotic translation initiation factor 3 subunit C (898 aa).

Over residues 1-10 (MSRFFHAKED) the composition is skewed to basic and acidic residues. 2 disordered regions span residues 1-38 (MSRFFHAKEDSDSDTSSSEDEVEDQKVNKSAKFRDDLD) and 162-238 (VTDY…SVTK). Positions 11-23 (SDSDTSSSEDEVE) are enriched in acidic residues. The span at 24-37 (DQKVNKSAKFRDDL) shows a compositional bias: basic and acidic residues. Acidic residues predominate over residues 170 to 187 (DEDGYETPEDEDDDDFGE). Residues 189–202 (SESKAEKSPGKPSE) are compositionally biased toward basic and acidic residues. Positions 209 to 218 (SDSDSDDDDS) are enriched in acidic residues. Over residues 219–228 (SNWSSEPESN) the composition is skewed to low complexity. In terms of domain architecture, PCI spans 630 to 806 (YHMHINVELM…DCLIMHRVEP (177 aa)). The disordered stretch occupies residues 829–898 (QILEPRTGRG…RRHPQKPRAF (70 aa)). 2 stretches are compositionally biased toward basic and acidic residues: residues 850–859 (RNERQGDKQK) and 866–878 (GERRGGQGQDGKR). Residues 888-898 (QRRHPQKPRAF) are compositionally biased toward basic residues.

The protein belongs to the eIF-3 subunit C family. In terms of assembly, component of the eukaryotic translation initiation factor 3 (eIF-3) complex.

The protein resides in the cytoplasm. Component of the eukaryotic translation initiation factor 3 (eIF-3) complex, which is involved in protein synthesis of a specialized repertoire of mRNAs and, together with other initiation factors, stimulates binding of mRNA and methionyl-tRNAi to the 40S ribosome. The eIF-3 complex specifically targets and initiates translation of a subset of mRNAs involved in cell proliferation. In Caenorhabditis elegans, this protein is Eukaryotic translation initiation factor 3 subunit C.